The primary structure comprises 204 residues: Leucyl/phenylalanyl-tRNA--protein transferase (204 aa).

This sequence belongs to the L/F-transferase family.

The protein resides in the cytoplasm. It carries out the reaction N-terminal L-lysyl-[protein] + L-leucyl-tRNA(Leu) = N-terminal L-leucyl-L-lysyl-[protein] + tRNA(Leu) + H(+). It catalyses the reaction N-terminal L-arginyl-[protein] + L-leucyl-tRNA(Leu) = N-terminal L-leucyl-L-arginyl-[protein] + tRNA(Leu) + H(+). The enzyme catalyses L-phenylalanyl-tRNA(Phe) + an N-terminal L-alpha-aminoacyl-[protein] = an N-terminal L-phenylalanyl-L-alpha-aminoacyl-[protein] + tRNA(Phe). Its function is as follows. Functions in the N-end rule pathway of protein degradation where it conjugates Leu, Phe and, less efficiently, Met from aminoacyl-tRNAs to the N-termini of proteins containing an N-terminal arginine or lysine. The protein is Leucyl/phenylalanyl-tRNA--protein transferase of Rhizobium johnstonii (strain DSM 114642 / LMG 32736 / 3841) (Rhizobium leguminosarum bv. viciae).